A 386-amino-acid polypeptide reads, in one-letter code: Acetylornithine aminotransferase (386 aa).

Pyridoxal 5'-phosphate is bound by residues glycine 96–alanine 97 and phenylalanine 123. Position 126 (arginine 126) interacts with N(2)-acetyl-L-ornithine. Aspartate 208–glutamine 211 is a pyridoxal 5'-phosphate binding site. An N6-(pyridoxal phosphate)lysine modification is found at lysine 237. Residue serine 265 participates in N(2)-acetyl-L-ornithine binding. Threonine 266 is a pyridoxal 5'-phosphate binding site.

It belongs to the class-III pyridoxal-phosphate-dependent aminotransferase family. ArgD subfamily. Homodimer. It depends on pyridoxal 5'-phosphate as a cofactor.

It is found in the cytoplasm. It catalyses the reaction N(2)-acetyl-L-ornithine + 2-oxoglutarate = N-acetyl-L-glutamate 5-semialdehyde + L-glutamate. The protein operates within amino-acid biosynthesis; L-arginine biosynthesis; N(2)-acetyl-L-ornithine from L-glutamate: step 4/4. This is Acetylornithine aminotransferase from Bacillus anthracis.